The sequence spans 445 residues: Ribosomal protein uS12 methylthiotransferase RimO (445 aa).

An MTTase N-terminal domain is found at 4-119 (YKVGMVSLGC…INEAIMNFIN (116 aa)). [4Fe-4S] cluster-binding residues include C13, C48, C82, C157, C161, and C164. In terms of domain architecture, Radical SAM core spans 143 to 373 (TTDKATAYLR…MLLQKELSEE (231 aa)). The 66-residue stretch at 376–441 (KNKLGREYDV…EYDLVGVVCN (66 aa)) folds into the TRAM domain.

It belongs to the methylthiotransferase family. RimO subfamily. [4Fe-4S] cluster is required as a cofactor.

It is found in the cytoplasm. It catalyses the reaction L-aspartate(89)-[ribosomal protein uS12]-hydrogen + (sulfur carrier)-SH + AH2 + 2 S-adenosyl-L-methionine = 3-methylsulfanyl-L-aspartate(89)-[ribosomal protein uS12]-hydrogen + (sulfur carrier)-H + 5'-deoxyadenosine + L-methionine + A + S-adenosyl-L-homocysteine + 2 H(+). In terms of biological role, catalyzes the methylthiolation of an aspartic acid residue of ribosomal protein uS12. The chain is Ribosomal protein uS12 methylthiotransferase RimO from Clostridium perfringens (strain SM101 / Type A).